The sequence spans 424 residues: L-glutamine:2-deoxy-scyllo-inosose aminotransferase (424 aa).

At Lys-202 the chain carries N6-(pyridoxal phosphate)lysine.

Belongs to the DegT/DnrJ/EryC1 family. L-glutamine:2-deoxy-scyllo-inosose/scyllo-inosose aminotransferase subfamily. It depends on pyridoxal 5'-phosphate as a cofactor.

The catalysed reaction is 2-deoxy-L-scyllo-inosose + L-glutamine = 2-deoxy-scyllo-inosamine + 2-oxoglutaramate. It catalyses the reaction 3-amino-2,3-dideoxy-scyllo-inosose + L-glutamine = 2-deoxystreptamine + 2-oxoglutaramate. It participates in metabolic intermediate biosynthesis; 2-deoxystreptamine biosynthesis; 2-deoxystreptamine from D-glucose 6-phosphate: step 2/4. The protein operates within metabolic intermediate biosynthesis; 2-deoxystreptamine biosynthesis; 2-deoxystreptamine from D-glucose 6-phosphate: step 4/4. It functions in the pathway antibiotic biosynthesis; ribostamycin biosynthesis. Its function is as follows. Catalyzes the PLP-dependent transamination of 2-deoxy-scyllo-inosose (2-DOI) to form 2-deoxy-scyllo-inosamine (2-DOIA) using L-glutamine as the amino donor. Also catalyzes the transamination of 3-amino-2,3-dideoxy-scyllo-inosose (keto-2-DOIA) into 2-deoxystreptamine (2-DOS). This chain is L-glutamine:2-deoxy-scyllo-inosose aminotransferase (rbmB), found in Streptomyces ribosidificus.